A 237-amino-acid polypeptide reads, in one-letter code: Demethylmenaquinone methyltransferase (237 aa).

S-adenosyl-L-methionine contacts are provided by residues T58, D79, and 106-107 (NA).

It belongs to the class I-like SAM-binding methyltransferase superfamily. MenG/UbiE family.

The catalysed reaction is a 2-demethylmenaquinol + S-adenosyl-L-methionine = a menaquinol + S-adenosyl-L-homocysteine + H(+). The protein operates within quinol/quinone metabolism; menaquinone biosynthesis; menaquinol from 1,4-dihydroxy-2-naphthoate: step 2/2. Methyltransferase required for the conversion of demethylmenaquinol (DMKH2) to menaquinol (MKH2). This chain is Demethylmenaquinone methyltransferase, found in Bacillus cereus (strain ATCC 10987 / NRS 248).